We begin with the raw amino-acid sequence, 577 residues long: Protein O-linked-mannose beta-1,4-N-acetylglucosaminyltransferase 2 (577 aa).

The Cytoplasmic portion of the chain corresponds to 1-4; sequence MNIA. A helical; Signal-anchor for type II membrane protein membrane pass occupies residues 5–25; it reads AVFNALLVSVLATVLWKYIKL. Topologically, residues 26 to 577 are lumenal; the sequence is REHAFMVEEE…PFADVLLCST (552 aa). N-linked (GlcNAc...) asparagine glycans are attached at residues Asn-98, Asn-275, Asn-335, and Asn-540. Residues 481–577 form the Fibronectin type-III domain; it reads KVRDARCQAS…PFADVLLCST (97 aa).

The protein belongs to the glycosyltransferase 61 family.

The protein resides in the endoplasmic reticulum membrane. The enzyme catalyses 3-O-(alpha-D-mannosyl)-L-threonyl-[protein] + UDP-N-acetyl-alpha-D-glucosamine = 3-O-(N-acetyl-beta-D-glucosaminyl-(1-&gt;4)-alpha-D-mannosyl)-L-threonyl-[protein] + UDP + H(+). Its pathway is protein modification; protein glycosylation. In terms of biological role, O-linked mannose beta-1,4-N-acetylglucosaminyltransferase that transfers UDP-N-acetyl-D-glucosamine to the 4-position of the mannose to generate N-acetyl-D-glucosamine-beta-1,4-O-D-mannosylprotein. Involved in the biosynthesis of the phosphorylated O-mannosyl trisaccharide (N-acetylgalactosamine-beta-3-N-acetylglucosamine-beta-4-(phosphate-6-)mannose), a carbohydrate structure present in alpha-dystroglycan (DAG1), which is required for binding laminin G-like domain-containing extracellular proteins with high affinity. In Gallus gallus (Chicken), this protein is Protein O-linked-mannose beta-1,4-N-acetylglucosaminyltransferase 2 (POMGNT2).